Here is a 276-residue protein sequence, read N- to C-terminus: Carbonic anhydrase Nec1 (276 aa).

The first 27 residues, 1 to 27, serve as a signal peptide directing secretion; that stretch reads MKMINSIFTHGSLIILLLLFHSISIKA. The Alpha-carbonic anhydrase domain occupies 34–270; sequence REFDYLEGSE…LNHREVQLHC (237 aa). Cys-59 and Cys-220 form a disulfide bridge. His-98 (proton acceptor) is an active-site residue. His-124 and His-126 together coordinate Zn(2+). Asn-134 is a glycosylation site (N-linked (GlcNAc...) asparagine). Residue His-143 participates in Zn(2+) binding. Residues 216–217 form a substrate binding region; sequence TT.

It belongs to the alpha-class carbonic anhydrase family. Homodimer. Zn(2+) is required as a cofactor. As to expression, confined to nectaries.

It catalyses the reaction hydrogencarbonate + H(+) = CO2 + H2O. Its pathway is one-carbon metabolism. Its function is as follows. Involved in the production of blood-red nectar containing the alkaloid nesocodin and that serves as a visual attractant for pollinator visitation, including vertebrates such as Phelsuma geckos. The nectar is initially acidic and pale yellow, but slowly becomes alkaline before turning into red within 24 hours. Together with NEC2 and NEC3, facilitates the condensation of sinapaldehyde ((E)-3,5-dimethoxy-4-hydroxycinnamaldehyde) and proline to form nesocodin, a pigment with a stable imine bond. Mediates the alkalinization (pH increase) of the flower nectar by catalyzing the reversible hydration of carbon dioxide. The protein is Carbonic anhydrase Nec1 of Nesocodon mauritianus (Blue Mauritius bellflower).